Here is a 135-residue protein sequence, read N- to C-terminus: Rheacalcin-1 (135 aa).

Intrachain disulfides connect C6–C17, C34–C131, and C106–C123. A C-type lectin domain is found at 13–132 (FRGNCYGYFR…CSERNAFICK (120 aa)).

It is found in the secreted. Its subcellular location is the extracellular space. The protein resides in the extracellular matrix. The protein is Rheacalcin-1 of Rhea americana (Greater rhea).